A 93-amino-acid polypeptide reads, in one-letter code: Putative pterin-4-alpha-carbinolamine dehydratase (93 aa).

The protein belongs to the pterin-4-alpha-carbinolamine dehydratase family.

The enzyme catalyses (4aS,6R)-4a-hydroxy-L-erythro-5,6,7,8-tetrahydrobiopterin = (6R)-L-erythro-6,7-dihydrobiopterin + H2O. This Trichormus variabilis (strain ATCC 29413 / PCC 7937) (Anabaena variabilis) protein is Putative pterin-4-alpha-carbinolamine dehydratase.